Here is a 157-residue protein sequence, read N- to C-terminus: Hydra actinoporin-like toxin 3 (157 aa).

Residues 1-14 (LEATVSRNKKYKFT) form the signal peptide. Positions 129 to 131 (IAG) match the Cell attachment site motif.

The protein belongs to the actinoporin family. HALT subfamily. In terms of assembly, octamer or nonamer in membranes. Monomer in the soluble state. In vitro, interacts with folate receptor alpha (of target organism).

It localises to the nematocyst. It is found in the secreted. The protein localises to the target cell membrane. In terms of biological role, pore-forming protein that forms hydrophilic pores and causes cytolysis. Compared to equinatoxin-2 (AC P61914), it reveals lower cytolysis activity (5-12-fold difference, tested on erythrocytes), a larger pore size (probably 2-3 nm) and different affinity to membrane lipids (100-fold lower affinity to sphingomyelin). Binds to the two sphingolipids, lysophosphatidic acid (LPA) and sphingosine-1-phosphate (S1P). Does not bind (or only weakly) to sulfatides (SFT). Shows cytolytic activity on HeLa cells, with a different potency than its paralogs (from most potent to less potent: HALT-4&gt;HALT-6~HALT-1&gt;HALT-3&gt;HALT-7&gt;HALT-2). Pore formation is a multi-step process that involves specific recognition of membrane lipid by a protein aromatic residues rich region, firm binding to the membrane (mainly driven by hydrophobic interactions) accompanied by the transfer of the N-terminal region to the lipid-water interface and finally pore formation after oligomerization of monomers. In vitro, binds to the folate receptor alpha (FOLR1), a GPI-anchored membrane protein that plays a major role in the uptake of folate/folic acid into cells via endocytosis, suggesting a possible involvement of this receptor in the mechanism of HALT-1-induced cell lysis. In vivo, does not cause visible paralysis in larvae of the blowfly Sarcophaga faculata, the most common arthropod prey of Hydra. This is Hydra actinoporin-like toxin 3 from Hydra vulgaris (Hydra).